We begin with the raw amino-acid sequence, 490 residues long: GTPase Der (490 aa).

EngA-type G domains are found at residues 3–166 (PVVA…MDDV) and 203–376 (IKLA…DSST). GTP-binding positions include 9–16 (GRPNVGKS), 56–60 (DTGGI), 118–121 (NKTD), 209–216 (GRPNVGKS), 256–260 (DTAGV), and 321–324 (NKWD). The 85-residue stretch at 377 to 461 (RRVSTAMLTR…PIRIQFKEGE (85 aa)) folds into the KH-like domain.

Belongs to the TRAFAC class TrmE-Era-EngA-EngB-Septin-like GTPase superfamily. EngA (Der) GTPase family. Associates with the 50S ribosomal subunit.

GTPase that plays an essential role in the late steps of ribosome biogenesis. The polypeptide is GTPase Der (Salmonella gallinarum (strain 287/91 / NCTC 13346)).